The following is a 104-amino-acid chain: DNA-directed RNA polymerase subunit omega (104 aa).

This sequence belongs to the RNA polymerase subunit omega family. In terms of assembly, the RNAP catalytic core consists of 2 alpha, 1 beta, 1 beta' and 1 omega subunit. When a sigma factor is associated with the core the holoenzyme is formed, which can initiate transcription.

The enzyme catalyses RNA(n) + a ribonucleoside 5'-triphosphate = RNA(n+1) + diphosphate. Promotes RNA polymerase assembly. Latches the N- and C-terminal regions of the beta' subunit thereby facilitating its interaction with the beta and alpha subunits. The chain is DNA-directed RNA polymerase subunit omega from Streptococcus agalactiae serotype Ia (strain ATCC 27591 / A909 / CDC SS700).